A 264-amino-acid chain; its full sequence is Undecaprenyl-diphosphatase (264 aa).

The next 8 membrane-spanning stretches (helical) occupy residues 15 to 37, 42 to 62, 84 to 104, 108 to 128, 143 to 163, 182 to 202, 217 to 237, and 243 to 263; these read GLTEFLPVSSTGHLIITGHLLGF, AASFEVAIQLGAILAVVVLYW, YLLFLTSLPASVLGLLAHDFI, LFNPYTVAWALGVGAIMILIV, VTPKLALGIGCFQCLALWPGF, IAAEYSFIAAVPIMFAATGYD, FLAVGFIVSFLSAWAAVKGFI, and LTLRPFAYYRLALAPLVLFFW.

It belongs to the UppP family.

The protein localises to the cell inner membrane. It catalyses the reaction di-trans,octa-cis-undecaprenyl diphosphate + H2O = di-trans,octa-cis-undecaprenyl phosphate + phosphate + H(+). Catalyzes the dephosphorylation of undecaprenyl diphosphate (UPP). Confers resistance to bacitracin. The protein is Undecaprenyl-diphosphatase of Maridesulfovibrio salexigens (strain ATCC 14822 / DSM 2638 / NCIMB 8403 / VKM B-1763) (Desulfovibrio salexigens).